We begin with the raw amino-acid sequence, 607 residues long: DNA primase (607 aa).

A CHC2-type zinc finger spans residues 39 to 63 (CPFHDDKNPSMSISSSKNIFKCWAC). In terms of domain architecture, Toprim spans 267-350 (NQLFIVEGYF…IVEIVQWEHN (84 aa)). Residues E273, D319, and D321 each coordinate Mg(2+).

This sequence belongs to the DnaG primase family. Monomer. Interacts with DnaB. Requires Zn(2+) as cofactor. It depends on Mg(2+) as a cofactor.

It carries out the reaction ssDNA + n NTP = ssDNA/pppN(pN)n-1 hybrid + (n-1) diphosphate.. Functionally, RNA polymerase that catalyzes the synthesis of short RNA molecules used as primers for DNA polymerase during DNA replication. This is DNA primase from Mycoplasma genitalium (strain ATCC 33530 / DSM 19775 / NCTC 10195 / G37) (Mycoplasmoides genitalium).